The sequence spans 354 residues: Methionine import ATP-binding protein MetN (354 aa).

Positions 8 to 250 (LDHIDITFRQ…PKEALTQEFI (243 aa)) constitute an ABC transporter domain. 42–49 (GYSGAGKS) lines the ATP pocket.

It belongs to the ABC transporter superfamily. Methionine importer (TC 3.A.1.24) family. In terms of assembly, the complex is composed of two ATP-binding proteins (MetN), two transmembrane proteins (MetI) and a solute-binding protein (MetQ).

Its subcellular location is the cell membrane. It carries out the reaction L-methionine(out) + ATP + H2O = L-methionine(in) + ADP + phosphate + H(+). The catalysed reaction is D-methionine(out) + ATP + H2O = D-methionine(in) + ADP + phosphate + H(+). Its function is as follows. Part of the ABC transporter complex MetNIQ involved in methionine import. Responsible for energy coupling to the transport system. In Streptococcus pyogenes serotype M1, this protein is Methionine import ATP-binding protein MetN.